Reading from the N-terminus, the 331-residue chain is FMRFamide-related neuropeptides (331 aa).

The first 25 residues, 1-25 (MRCWSPCSLLVVIVIYCLSSHTSEA), serve as a signal peptide directing secretion. Positions 26–65 (FDLAQACVESQRLSLLPICDTIFAVQQEGAQQSADDGMRS) are excised as a propeptide. 2 positions are modified to phenylalanine amide: F71 and F83. Positions 86–94 (NVPDLPFED) are excised as a propeptide. Position 100 is a phenylalanine amide (F100). Positions 103–168 (AAPQLDDLLK…YIDDVEDSDV (66 aa)) are excised as a propeptide. Residues 122–158 (QKADETSVRRKRSTDAAPQNNAENPEQKNDSAKITKR) are disordered. A compositionally biased stretch (basic and acidic residues) spans 146–158 (PEQKNDSAKITKR). 2 positions are modified to phenylalanine amide: F174 and F181. The propeptide occupies 184-194 (NPSDAGNKLTE). At F200 the chain carries Phenylalanine amide. Residues 203-205 (DPE) constitute a propeptide that is removed on maturation. At F211 the chain carries Phenylalanine amide. A propeptide spanning residues 214-216 (SDD) is cleaved from the precursor. Residue F222 is modified to Phenylalanine amide. A propeptide spanning residues 225-236 (NPSDVEDELEED) is cleaved from the precursor. Residue F242 is modified to Phenylalanine amide. Residues 245–254 (GGEDDEEEAE) constitute a propeptide that is removed on maturation. Position 260 is a phenylalanine amide (F260). A propeptide spanning residues 263–265 (DPE) is cleaved from the precursor. A Phenylalanine amide modification is found at F271. Positions 274-277 (SGED) are excised as a propeptide. Positions 282–296 (RFGRNPDEQEADKRF) are enriched in basic and acidic residues. The segment at 282–310 (RFGRNPDEQEADKRFMRFGRGGEDDEVST) is disordered. The residue at position 283 (F283) is a Phenylalanine amide. The propeptide occupies 286–293 (NPDEQEAD). F299 bears the Phenylalanine amide mark. A propeptide spanning residues 302–312 (GGEDDEVSTED) is cleaved from the precursor. F318 is subject to Phenylalanine amide. A propeptide spanning residues 321 to 331 (SADKCKGCLEG) is cleaved from the precursor.

It belongs to the FARP (FMRFamide related peptide) family.

The protein resides in the secreted. Its function is as follows. Excitatory neurotransmitters that directly modulate chromatophore function by activating chromatophore expansion at the chromatophore neuromuscular junction. In Doryteuthis pealeii (Longfin inshore squid), this protein is FMRFamide-related neuropeptides.